The chain runs to 233 residues: Peptidyl-tRNA hydrolase (233 aa).

Tyrosine 14 lines the tRNA pocket. The Proton acceptor role is filled by histidine 19. Residues phenylalanine 64, asparagine 66, and asparagine 112 each contribute to the tRNA site. The disordered stretch occupies residues 187 to 233 (VSPRRSGTGQKGKDKPPAPAKQQATATKAEPEPDTRSALQKLMERFK).

This sequence belongs to the PTH family. As to quaternary structure, monomer.

It localises to the cytoplasm. It carries out the reaction an N-acyl-L-alpha-aminoacyl-tRNA + H2O = an N-acyl-L-amino acid + a tRNA + H(+). In terms of biological role, hydrolyzes ribosome-free peptidyl-tRNAs (with 1 or more amino acids incorporated), which drop off the ribosome during protein synthesis, or as a result of ribosome stalling. Catalyzes the release of premature peptidyl moieties from peptidyl-tRNA molecules trapped in stalled 50S ribosomal subunits, and thus maintains levels of free tRNAs and 50S ribosomes. This chain is Peptidyl-tRNA hydrolase, found in Roseobacter denitrificans (strain ATCC 33942 / OCh 114) (Erythrobacter sp. (strain OCh 114)).